The sequence spans 454 residues: V-type ATP synthase subunit I 2 (454 aa).

The interval 101 to 121 (EREGDAPSVPRGKSSVAHDSA) is disordered. A run of 4 helical transmembrane segments spans residues 254-274 (LLFG…VLGL), 293-313 (VFLS…EFFA), 351-371 (MAFF…GLII), and 424-444 (ACLS…SVCV).

It belongs to the V-ATPase 116 kDa subunit family.

The protein localises to the cell membrane. Functionally, produces ATP from ADP in the presence of a proton gradient across the membrane. The sequence is that of V-type ATP synthase subunit I 2 (atpI2) from Treponema pallidum (strain Nichols).